A 275-amino-acid polypeptide reads, in one-letter code: Large ribosomal subunit protein uL2 (275 aa).

A disordered region spans residues 222-275; sequence GVAMNPVDHPHGGGEGRNKGRHPTSPWGQKSKGLKTRHNKRTDNMIIRRRAKKK. The segment covering 229 to 239 has biased composition (basic and acidic residues); sequence DHPHGGGEGRN.

This sequence belongs to the universal ribosomal protein uL2 family. In terms of assembly, part of the 50S ribosomal subunit. Forms a bridge to the 30S subunit in the 70S ribosome.

In terms of biological role, one of the primary rRNA binding proteins. Required for association of the 30S and 50S subunits to form the 70S ribosome, for tRNA binding and peptide bond formation. It has been suggested to have peptidyltransferase activity; this is somewhat controversial. Makes several contacts with the 16S rRNA in the 70S ribosome. In Psychrobacter cryohalolentis (strain ATCC BAA-1226 / DSM 17306 / VKM B-2378 / K5), this protein is Large ribosomal subunit protein uL2.